The primary structure comprises 208 residues: Glycerol-3-phosphate acyltransferase (208 aa).

6 consecutive transmembrane segments (helical) span residues Pro-7–Leu-27, Met-63–Ala-83, Ala-86–Phe-106, Gly-123–Val-143, Ile-149–His-169, and Pro-170–Tyr-190.

Belongs to the PlsY family. In terms of assembly, probably interacts with PlsX.

The protein localises to the cell inner membrane. The catalysed reaction is an acyl phosphate + sn-glycerol 3-phosphate = a 1-acyl-sn-glycero-3-phosphate + phosphate. It functions in the pathway lipid metabolism; phospholipid metabolism. In terms of biological role, catalyzes the transfer of an acyl group from acyl-phosphate (acyl-PO(4)) to glycerol-3-phosphate (G3P) to form lysophosphatidic acid (LPA). This enzyme utilizes acyl-phosphate as fatty acyl donor, but not acyl-CoA or acyl-ACP. The polypeptide is Glycerol-3-phosphate acyltransferase (Wolinella succinogenes (strain ATCC 29543 / DSM 1740 / CCUG 13145 / JCM 31913 / LMG 7466 / NCTC 11488 / FDC 602W) (Vibrio succinogenes)).